Reading from the N-terminus, the 240-residue chain is tRNA1(Val) (adenine(37)-N6)-methyltransferase (240 aa).

The protein belongs to the methyltransferase superfamily. tRNA (adenine-N(6)-)-methyltransferase family.

The protein resides in the cytoplasm. The enzyme catalyses adenosine(37) in tRNA1(Val) + S-adenosyl-L-methionine = N(6)-methyladenosine(37) in tRNA1(Val) + S-adenosyl-L-homocysteine + H(+). Specifically methylates the adenine in position 37 of tRNA(1)(Val) (anticodon cmo5UAC). In Photobacterium profundum (strain SS9), this protein is tRNA1(Val) (adenine(37)-N6)-methyltransferase.